Consider the following 636-residue polypeptide: uncharacterized protein (636 aa).

Disordered stretches follow at residues 1–22 (MYNVRGDLNRKTPSDGNVNEIG) and 81–107 (SSQTYNRYPNGGNSAGSDMYSTSPQNN). The Cytoplasmic segment spans residues 1–170 (MYNVRGDLNR…YFVGGEGLMQ (170 aa)). Residues 171 to 191 (LLFLLFLAAGTGMLFIGLPIL) traverse the membrane as a helical; Signal-anchor for type II membrane protein segment. At 192-636 (TYTGHNSLAS…RPKNSLMDGC (445 aa)) the chain is on the lumenal side. A GH16 domain is found at 218–587 (LRYGSLIDPD…YVRIYQDSSD (370 aa)). Residues N291, N378, N429, N464, N489, and N616 are each glycosylated (N-linked (GlcNAc...) asparagine).

The protein belongs to the SKN1/KRE6 family.

The protein localises to the endoplasmic reticulum membrane. Its function is as follows. Required for synthesis of the major beta-glucans of the yeast cell wall. This is an uncharacterized protein from Schizosaccharomyces pombe (strain 972 / ATCC 24843) (Fission yeast).